The sequence spans 196 residues: MADS-box protein FLOWERING LOCUS C (196 aa).

Residues 1–61 (MGRKKLEIKR…GKLYSFSSGD (61 aa)) enclose the MADS-box domain. The Nuclear localization signal signature appears at 8–15 (IKRIENKS). Residues 80-170 (ALDHQSKALN…ASQMENNHHV (91 aa)) form the K-box domain.

As to expression, high expression in the vegetative apex and in root tissue and lower expression in leaves and stems. Not detected in young tissues of the inflorescence. Before fertilization, expressed in ovules, but not in pollen or stamens, of non-vernalized plants. After vernalization, not detected in ovules.

It is found in the nucleus. Its function is as follows. Putative transcription factor that seems to play a central role in the regulation of flowering time in the late-flowering phenotype by interacting with 'FRIGIDA', the autonomous and the vernalization flowering pathways. Inhibits flowering by repressing 'SUPPRESSOR OF OVEREXPRESSION OF CONSTANS 1'. At elevated temperatures (e.g. 29 degrees Celsius), maintained at high levels in a JMJ30/JMJ32-dependent manner to prevent extreme precocious flowering. The polypeptide is MADS-box protein FLOWERING LOCUS C (Arabidopsis thaliana (Mouse-ear cress)).